The following is a 342-amino-acid chain: S-adenosylmethionine:tRNA ribosyltransferase-isomerase (342 aa).

It belongs to the QueA family. In terms of assembly, monomer.

The protein localises to the cytoplasm. The catalysed reaction is 7-aminomethyl-7-carbaguanosine(34) in tRNA + S-adenosyl-L-methionine = epoxyqueuosine(34) in tRNA + adenine + L-methionine + 2 H(+). The protein operates within tRNA modification; tRNA-queuosine biosynthesis. Transfers and isomerizes the ribose moiety from AdoMet to the 7-aminomethyl group of 7-deazaguanine (preQ1-tRNA) to give epoxyqueuosine (oQ-tRNA). The polypeptide is S-adenosylmethionine:tRNA ribosyltransferase-isomerase (Streptococcus pyogenes serotype M49 (strain NZ131)).